The following is a 147-amino-acid chain: Phospholipase A2 SSD1043 (147 aa).

A signal peptide spans 1–22 (MSPKFMFFSIIAVWSCAAVTEA). The propeptide occupies 23–28 (LFIQHR). 5 disulfides stabilise this stretch: Cys55–Cys71, Cys70–Cys130, Cys77–Cys123, Cys86–Cys116, and Cys109–Cys121. Positions 56 and 58 each coordinate Ca(2+). Residue His74 is part of the active site. Ca(2+) is bound at residue Asp75. Asp124 is an active-site residue.

Requires Ca(2+) as cofactor. In terms of tissue distribution, expressed by the venom gland.

Its subcellular location is the secreted. It carries out the reaction a 1,2-diacyl-sn-glycero-3-phosphocholine + H2O = a 1-acyl-sn-glycero-3-phosphocholine + a fatty acid + H(+). PLA2 catalyzes the calcium-dependent hydrolysis of the 2-acyl groups in 3-sn-phosphoglycerides. The protein is Phospholipase A2 SSD1043 of Scolopendra dehaani (Thai centipede).